A 283-amino-acid chain; its full sequence is Thymidylate synthase (283 aa).

Residue arginine 22 participates in dUMP binding. Cysteine 160 serves as the catalytic Nucleophile. DUMP-binding positions include 180 to 183 (RSCD), asparagine 191, and 221 to 223 (HIY). Aspartate 183 lines the (6R)-5,10-methylene-5,6,7,8-tetrahydrofolate pocket. Residue serine 282 participates in (6R)-5,10-methylene-5,6,7,8-tetrahydrofolate binding.

The protein belongs to the thymidylate synthase family. Bacterial-type ThyA subfamily. As to quaternary structure, homodimer.

It localises to the cytoplasm. It carries out the reaction dUMP + (6R)-5,10-methylene-5,6,7,8-tetrahydrofolate = 7,8-dihydrofolate + dTMP. It functions in the pathway pyrimidine metabolism; dTTP biosynthesis. Functionally, catalyzes the reductive methylation of 2'-deoxyuridine-5'-monophosphate (dUMP) to 2'-deoxythymidine-5'-monophosphate (dTMP) while utilizing 5,10-methylenetetrahydrofolate (mTHF) as the methyl donor and reductant in the reaction, yielding dihydrofolate (DHF) as a by-product. This enzymatic reaction provides an intracellular de novo source of dTMP, an essential precursor for DNA biosynthesis. This is Thymidylate synthase from Psychromonas ingrahamii (strain DSM 17664 / CCUG 51855 / 37).